The chain runs to 138 residues: Basic phospholipase A2 homolog 7 (138 aa).

The signal sequence occupies residues 1-16 (MRTLWLMAVLLVGVEG). Cystine bridges form between Cys42/Cys131, Cys44/Cys60, Cys59/Cys111, Cys65/Cys138, Cys66/Cys104, and Cys91/Cys102. Residues 121–133 (KKKKINLKLFCKK) are important for membrane-damaging activities in eukaryotes and bacteria; heparin-binding.

Belongs to the phospholipase A2 family. Group II subfamily. K49 sub-subfamily. In terms of tissue distribution, expressed by the venom gland.

The protein resides in the secreted. In terms of biological role, snake venom phospholipase A2 homolog that lacks enzymatic activity. Is myotoxic and displays edema-inducing activities. A model of myotoxic mechanism has been proposed: an apo Lys49-PLA2 is activated by the entrance of a hydrophobic molecule (e.g. fatty acid) at the hydrophobic channel of the protein leading to a reorientation of a monomer. This reorientation causes a transition between 'inactive' to 'active' states, causing alignment of C-terminal and membrane-docking sites (MDoS) side-by-side and putting the membrane-disruption sites (MDiS) in the same plane, exposed to solvent and in a symmetric position for both monomers. The MDoS region stabilizes the toxin on membrane by the interaction of charged residues with phospholipid head groups. Subsequently, the MDiS region destabilizes the membrane with penetration of hydrophobic residues. This insertion causes a disorganization of the membrane, allowing an uncontrolled influx of ions (i.e. calcium and sodium), and eventually triggering irreversible intracellular alterations and cell death. This is Basic phospholipase A2 homolog 7 from Craspedocephalus gramineus (Bamboo pit viper).